The sequence spans 342 residues: AA9 family lytic polysaccharide monooxygenase AA9-X282 (342 aa).

The signal sequence occupies residues 1 to 18; it reads MKSFASLLFLAATAAAHA. H17 serves as a coordination point for Cu(2+). T19 and T57 each carry phosphothreonine. Phosphoserine is present on S59. The cysteines at positions 63 and 181 are disulfide-linked. Residue H93 participates in Cu(2+) binding. The O2 site is built by H167 and Q176. A Cu(2+)-binding site is contributed by Y178. Residue N189 is glycosylated (N-linked (GlcNAc...) asparagine). Residues 233 to 263 are X282 extension; the sequence is SPATVANTPYPTTATWNTALQPTTVPTVTPP. Residues 281-302 form a disordered region; it reads VTSQPPVPPTTQQPPVVTPTAP. A compositionally biased stretch (pro residues) spans 285–302; it reads PPVPPTTQQPPVVTPTAP. The CBM1 domain maps to 306-342; it reads PLQTQYGQCGGQGWNGPTQCQPPYTCTASNQWYHQCL.

This sequence belongs to the polysaccharide monooxygenase AA9 family. The cofactor is Cu(2+).

It is found in the secreted. The catalysed reaction is [(1-&gt;4)-beta-D-glucosyl]n+m + reduced acceptor + O2 = 4-dehydro-beta-D-glucosyl-[(1-&gt;4)-beta-D-glucosyl]n-1 + [(1-&gt;4)-beta-D-glucosyl]m + acceptor + H2O.. Functionally, lytic polysaccharide monooxygenase (LPMO) that depolymerizes crystalline and amorphous polysaccharides via the oxidation of scissile alpha- or beta-(1-4)-glycosidic bonds, yielding C1 oxidation products. Catalysis by LPMOs requires the reduction of the active-site copper from Cu(II) to Cu(I) by a reducing agent and H(2)O(2) or O(2) as a cosubstrate. Shows only weak binding properties to cellulose, and low cellulolytic oxidative activity which questions the involvement of X282 extension-containing AA9 proteins in the degradation of plant cell wall and opens new avenues as to the divergence of function of some AA9 members. In Coprinopsis cinerea (strain Okayama-7 / 130 / ATCC MYA-4618 / FGSC 9003) (Inky cap fungus), this protein is AA9 family lytic polysaccharide monooxygenase AA9-X282.